Consider the following 212-residue polypeptide: Thymidylate kinase (212 aa).

10–17 is an ATP binding site; it reads GPEGAGKT.

Belongs to the thymidylate kinase family.

The enzyme catalyses dTMP + ATP = dTDP + ADP. Phosphorylation of dTMP to form dTDP in both de novo and salvage pathways of dTTP synthesis. This chain is Thymidylate kinase, found in Bacillus licheniformis (strain ATCC 14580 / DSM 13 / JCM 2505 / CCUG 7422 / NBRC 12200 / NCIMB 9375 / NCTC 10341 / NRRL NRS-1264 / Gibson 46).